Reading from the N-terminus, the 743-residue chain is Peptide transporter family 1 (743 aa).

The disordered stretch occupies residues 1–28 (MASEITNGKNGQNGKNGQKEESDSQIAP). The span at 7–16 (NGKNGQNGKN) shows a compositional bias: low complexity. 10 helical membrane-spanning segments follow: residues 74–94 (VLFHTFTMLVYIFPLIGALIA), 104–124 (ILYLSLVYSLGAMVVSFGAVP), 132–152 (AVTVVGLLLIAIGTGGIKPCV), 173–193 (FSLFYFAINAGSLISTTFTPI), 207–227 (FSLAFGVPAILMIFSVIIFMA), 334–354 (VVNPLLILGFLPLFDYIIYPA), 364–384 (LQKLTLGLLLAALGFFLSAGL), 597–619 (LPQIVVMTAAEVMFSVTGLEFSY), 629–649 (VLQACWLLSVAIGNMLVVVIA), and 659–679 (GEFTLFASLMLVDMMIFLWLA).

Belongs to the major facilitator superfamily. Proton-dependent oligopeptide transporter (POT/PTR) (TC 2.A.17) family. In terms of tissue distribution, expressed in thorax and abdomen of females: apical epithelial membranes of midgut, rectum, and reproductive tract. Also expressed in neuropil of the central nervous system, with elevated expression within the alpha- and beta-lobes of the mushroom bodies.

It is found in the membrane. In terms of biological role, important role in absorption of dietary peptides. High-affinity transporter of alanylalanine. Dipeptide transport activity is proton dependent. This chain is Peptide transporter family 1 (yin), found in Drosophila melanogaster (Fruit fly).